Here is a 280-residue protein sequence, read N- to C-terminus: tRNA pseudouridine synthase A (280 aa).

Aspartate 60 (nucleophile) is an active-site residue. Substrate is bound at residue tyrosine 119.

Belongs to the tRNA pseudouridine synthase TruA family. In terms of assembly, homodimer.

It carries out the reaction uridine(38/39/40) in tRNA = pseudouridine(38/39/40) in tRNA. Functionally, formation of pseudouridine at positions 38, 39 and 40 in the anticodon stem and loop of transfer RNAs. The protein is tRNA pseudouridine synthase A of Treponema pallidum (strain Nichols).